The primary structure comprises 170 residues: Fimbrial protein (170 aa).

The propeptide at 1-7 (MNTLQKG) is leader sequence. Phe8 is subject to N-methylphenylalanine. Residues 8–28 (FTLIELMIVIAIVGILAAVAL) traverse the membrane as a helical segment. O-linked (Gal...) serine glycosylation occurs at Ser70. The residue at position 100 (Ser100) is an O-(sn-1-glycerophosphoryl)serine. Cys127 and Cys163 form a disulfide bridge.

The protein belongs to the N-Me-Phe pilin family. As to quaternary structure, the pili are polar flexible filaments of about 5.4 nanometers diameter and 2.5 micrometers average length; they consist of only a single polypeptide chain arranged in a helical configuration of five subunits per turn in the assembled pilus. O-linked glycan has been reported to consist either of the Gal(alpha1-3) GlcNAc disaccharide, or the Gal(beta 1-4) Gal(alpha 1-3) 2,4-diacetamido-2,4,6-trideoxyhexose trisaccharide.

Its subcellular location is the fimbrium. It is found in the membrane. Major component of the type IV pilus (T4P) that plays a role in cellular adherence, microcolony formation as well as twitching motility. The chain is Fimbrial protein (pilE) from Neisseria meningitidis serogroup B (strain ATCC BAA-335 / MC58).